A 235-amino-acid chain; its full sequence is Ribosome maturation factor RimM (235 aa).

Residues 1–19 (MKHEEANKEIGGRGAEGQR) show a composition bias toward basic and acidic residues. The disordered stretch occupies residues 1-49 (MKHEEANKEIGGRGAEGQRSKRVGGNSKIQNIQSPAPNPQPIVPNTQSP). One can recognise a PRC barrel domain in the interval 150 to 230 (EDEYHVLDLI…RIEITPPPGL (81 aa)).

The protein belongs to the RimM family. As to quaternary structure, binds ribosomal protein uS19.

It is found in the cytoplasm. Its function is as follows. An accessory protein needed during the final step in the assembly of 30S ribosomal subunit, possibly for assembly of the head region. Essential for efficient processing of 16S rRNA. May be needed both before and after RbfA during the maturation of 16S rRNA. It has affinity for free ribosomal 30S subunits but not for 70S ribosomes. In Nostoc punctiforme (strain ATCC 29133 / PCC 73102), this protein is Ribosome maturation factor RimM.